Consider the following 225-residue polypeptide: ATP-dependent Clp protease proteolytic subunit (225 aa).

Catalysis depends on Ser-123, which acts as the Nucleophile. Residue His-148 is part of the active site.

The protein belongs to the peptidase S14 family. Fourteen ClpP subunits assemble into 2 heptameric rings which stack back to back to give a disk-like structure with a central cavity, resembling the structure of eukaryotic proteasomes.

It is found in the cytoplasm. It catalyses the reaction Hydrolysis of proteins to small peptides in the presence of ATP and magnesium. alpha-casein is the usual test substrate. In the absence of ATP, only oligopeptides shorter than five residues are hydrolyzed (such as succinyl-Leu-Tyr-|-NHMec, and Leu-Tyr-Leu-|-Tyr-Trp, in which cleavage of the -Tyr-|-Leu- and -Tyr-|-Trp bonds also occurs).. In terms of biological role, cleaves peptides in various proteins in a process that requires ATP hydrolysis. Has a chymotrypsin-like activity. Plays a major role in the degradation of misfolded proteins. The polypeptide is ATP-dependent Clp protease proteolytic subunit (Chlorobium luteolum (strain DSM 273 / BCRC 81028 / 2530) (Pelodictyon luteolum)).